We begin with the raw amino-acid sequence, 392 residues long: Selenide, water dikinase 1 (392 aa).

The active site involves Cys-31. Residues Lys-32, 67 to 69 (GMD), Asp-87, Asp-110, and 161 to 164 (GGQT) contribute to the ATP site. Asp-69 contacts Mg(2+). A Mg(2+)-binding site is contributed by Asp-110. Residue Asp-265 participates in Mg(2+) binding. Thr-387 bears the Phosphothreonine mark.

This sequence belongs to the selenophosphate synthase 1 family. Class II subfamily. As to quaternary structure, homodimer. Mg(2+) serves as cofactor.

It localises to the cell membrane. Its subcellular location is the nucleus membrane. It catalyses the reaction hydrogenselenide + ATP + H2O = selenophosphate + AMP + phosphate + 2 H(+). Functionally, synthesizes selenophosphate from selenide and ATP. The chain is Selenide, water dikinase 1 (sephs1) from Danio rerio (Zebrafish).